The primary structure comprises 108 residues: Heme oxygenase (staphylobilin-producing) 2 (108 aa).

Residues 2 to 93 form the ABM domain; that stretch reads FMAENRLQLQ…DDDGQQSPIL (92 aa). Asn6 is a Fe cation binding site. Residues 21 to 28 and His76 contribute to the heme site; that span reads RFYNRQGI.

This sequence belongs to the antibiotic biosynthesis monooxygenase family. Heme-degrading monooxygenase IsdG subfamily. In terms of assembly, homodimer.

It localises to the cytoplasm. The catalysed reaction is heme b + 5 AH2 + 4 O2 + 2 H(+) = delta-staphylobilin + Fe(2+) + formaldehyde + 5 A + 4 H2O. It carries out the reaction heme b + 5 AH2 + 4 O2 + 2 H(+) = beta-staphylobilin + Fe(2+) + formaldehyde + 5 A + 4 H2O. Its function is as follows. Allows bacterial pathogens to use the host heme as an iron source. Catalyzes the oxidative degradation of the heme macrocyclic porphyrin ring to the oxo-bilirubin chromophore staphylobilin (a mixture of the linear tetrapyrroles 5-oxo-delta-bilirubin and 15-oxo-beta-bilirubin) in the presence of a suitable electron donor such as ascorbate or NADPH--cytochrome P450 reductase, with subsequent release of free iron. This chain is Heme oxygenase (staphylobilin-producing) 2 (isdI), found in Staphylococcus aureus (strain MRSA252).